The chain runs to 841 residues: Transcription regulator protein BACH2 (841 aa).

Residues cysteine 37–arginine 103 form the BTB domain. Disordered stretches follow at residues histidine 153–serine 173, glutamate 204–threonine 226, and serine 246–leucine 329. The span at alanine 160–aspartate 172 shows a compositional bias: acidic residues. Composition is skewed to basic and acidic residues over residues threonine 214–alanine 224 and proline 298–glutamine 313. The residue at position 315 (serine 315) is a Phosphoserine. Glycyl lysine isopeptide (Lys-Gly) (interchain with G-Cter in SUMO2) cross-links involve residues lysine 382 and lysine 421. Serine 521 is subject to Phosphoserine; by RPS6KB1. Positions glutamine 583–glycine 610 are disordered. The segment covering serine 584–glutamate 598 has biased composition (polar residues). The bZIP domain maps to phenylalanine 646–leucine 709. Residues arginine 651–lysine 667 form a basic motif region. The tract at residues isoleucine 671–isoleucine 678 is leucine-zipper. The interval proline 777 to glutamine 816 is disordered. Positions aspartate 821–threonine 841 match the Nuclear export signal motif.

It belongs to the bZIP family. CNC subfamily. As to quaternary structure, homodimer; disulfide-linked. Heterodimer of BACH2 and Maf-related transcription factors. Phosphorylation at Ser-521 downstream of the PI-3K pathway promotes nuclear export. Post-translationally, the reversible disulfide bond may provide a mechanism to regulate the activity in oxidative stress responses. B-cell specific.

It is found in the cytoplasm. Its subcellular location is the nucleus. Its function is as follows. Transcriptional regulator that acts as a repressor or activator. Binds to Maf recognition elements (MARE). Plays an important role in coordinating transcription activation and repression by MAFK. Induces apoptosis in response to oxidative stress through repression of the antiapoptotic factor HMOX1. Positively regulates the nuclear import of actin. Is a key regulator of adaptive immunity, crucial for the maintenance of regulatory T-cell function and B-cell maturation. The chain is Transcription regulator protein BACH2 (BACH2) from Homo sapiens (Human).